The following is a 282-amino-acid chain: Glycine betaine/carnitine transport permease protein GbuB (282 aa).

6 helical membrane-spanning segments follow: residues 44-64 (VFDL…TFWV), 70-90 (KWGL…LDFW), 99-119 (LVLT…IWMA), 140-160 (AFVY…PGVV), 220-240 (IMLA…GLGT), and 251-271 (AGGG…LDRL). The region spanning 93–272 (MTQTLTLVLT…IVAIILDRLT (180 aa)) is the ABC transmembrane type-1 domain.

The protein belongs to the binding-protein-dependent transport system permease family. As to quaternary structure, the complex is composed of two ATP-binding proteins (GbuA), two transmembrane proteins (GbuB) and a solute-binding protein (GbuC).

The protein localises to the cell membrane. The complex is activated by an osmotic gradient or by low temperature. Part of the ABC transporter complex GbuABC involved in glycine betaine uptake. Responsible for the translocation of the substrate across the membrane. Involved, with BetL and OpuC, in osmoprotection and cryoprotection of Listeria. Can also uptake carnitine when carnitine is abundant in the growth medium. The chain is Glycine betaine/carnitine transport permease protein GbuB (gbuB) from Listeria monocytogenes serotype 1/2a (strain 10403S).